The chain runs to 406 residues: O-glycosyltransferase PaGT (406 aa).

A disordered region spans residues 1–26; the sequence is MSPPSQIKPPQGTTPVPPSELDPRSD.

Belongs to the afumC glycosyltransferase family.

It functions in the pathway mycotoxin biosynthesis. In terms of biological role, O-glycosyltransferase; part of the 2 gene clusters that mediate the biosynthesis of fusicoccins, diterpene glucosides that display phytohormone-like activity and function as potent activators of plasma membrane H(+)-ATPases in plants by modifying 14-3-3 proteins and cause the plant disease constriction canker. The first step in the pathway is performed by the fusicoccadiene synthase PaFS that possesses both prenyl transferase and terpene cyclase activity, converting isopentenyl diphosphate and dimethylallyl diphosphate into geranylgeranyl diphosphate (GGDP) and successively converting GGDP into fusicocca-2,10(14)-diene, a precursor for fusicoccin H. The second step is the oxidation at the C-8 position by the cytochrome P450 monooxygenase PaP450-2 to yield fusicocca-2,10(14)-diene-8-beta-ol. The cytochrome P450 monooxygenase PaP450-1 then catalyzes the hydroxylation at the C-16 position to produce fusicocca-2,10(14)-diene-8-beta,16-diol. The dioxygenase fc-dox then catalyzes the 16-oxydation of fusicocca-2,10(14)-diene-8-beta,16-diol to yield an aldehyde (8-beta-hydroxyfusicocca-1,10(14)-dien-16-al). The short-chain dehydrogenase/reductase fc-sdr catalyzes the reduction of the aldehyde to yield fusicocca-1,10(14)-diene-8-beta,16-diol. The next step is the hydroxylation at C-9 performed by the cytochrome P450 monooxygenase PaP450-3 that leads to fusicoccin H aglycon which is glycosylated to fusicoccin H by the O-glycosyltransferase PaGT. Hydroxylation at C-12 by the cytochrome P450 monooxygenase PaP450-4 leads then to the production of fusicoccin Q and is followed by methylation by the O-methyltransferase PaMT to yield fusicoccin P. Fusicoccin P is further converted to fusicoccin J via prenylation by the O-glucose prenyltransferase PaPT. Cytochrome P450 monooxygenase PaP450-5 then performs hydroxylation at C-19 to yield dideacetyl-fusicoccin A which is acetylated to 3'-O-deacetyl-fusicoccin A by the O-acetyltransferase PaAT-2. Finally, a another acetylation by the O-acetyltransferase PaAT-1 yields fusicoccin A. This Phomopsis amygdali (Fusicoccum amygdali) protein is O-glycosyltransferase PaGT.